The chain runs to 987 residues: ATP-dependent 6-phosphofructokinase subunit alpha (987 aa).

Residues 1 to 580 (MQSQDSCYGV…LYENFLSTTV (580 aa)) form an N-terminal catalytic PFK domain 1 region. Ser3 carries the phosphoserine modification. Lys89 is covalently cross-linked (Glycyl lysine isopeptide (Lys-Gly) (interchain with G-Cter in ubiquitin)). Phosphoserine is present on residues Ser166, Ser179, Ser185, Ser189, and Ser192. Gly215 serves as a coordination point for ATP. Residue Ser217 is modified to Phosphoserine. Residues 278 to 279 (RS) and 308 to 311 (GDGS) each bind ATP. Asp309 lines the Mg(2+) pocket. Beta-D-fructose 6-phosphate-binding positions include 354–356 (SID), Arg391, and 398–400 (MGR). Catalysis depends on Asp356, which acts as the Proton acceptor. A Phosphothreonine modification is found at Thr450. Residues Glu455, Lys482, and 488 to 491 (HVQR) contribute to the beta-D-fructose 6-phosphate site. The tract at residues 581 to 594 (KDDGSELLPVSDRL) is interdomain linker. The C-terminal regulatory PFK domain 2 stretch occupies residues 595–987 (NIGIVHVGAP…EVAALAAENK (393 aa)). Lys625 is covalently cross-linked (Glycyl lysine isopeptide (Lys-Gly) (interchain with G-Cter in ubiquitin)). Residues Arg665, 722-726 (TVSNN), Arg760, 767-769 (QGG), Glu827, Arg853, 859-862 (HVQQ), and Arg952 contribute to the beta-D-fructose 2,6-bisphosphate site.

Belongs to the phosphofructokinase type A (PFKA) family. ATP-dependent PFK group I subfamily. Eukaryotic two domain clade 'E' sub-subfamily. As to quaternary structure, heterooctamer of 4 alpha and 4 beta chains. It depends on Mg(2+) as a cofactor.

Its subcellular location is the cytoplasm. It localises to the mitochondrion outer membrane. The enzyme catalyses beta-D-fructose 6-phosphate + ATP = beta-D-fructose 1,6-bisphosphate + ADP + H(+). It participates in carbohydrate degradation; glycolysis; D-glyceraldehyde 3-phosphate and glycerone phosphate from D-glucose: step 3/4. Allosterically activated by ADP, AMP, or fructose 2,6-bisphosphate, and allosterically inhibited by ATP or citrate. Functionally, catalyzes the phosphorylation of D-fructose 6-phosphate to fructose 1,6-bisphosphate by ATP, the first committing step of glycolysis. The sequence is that of ATP-dependent 6-phosphofructokinase subunit alpha (PFK1) from Saccharomyces cerevisiae (strain ATCC 204508 / S288c) (Baker's yeast).